The primary structure comprises 232 residues: Thiamine import ATP-binding protein ThiQ (232 aa).

Residues leucine 2 to isoleucine 230 form the ABC transporter domain. Glycine 32–serine 39 is an ATP binding site.

It belongs to the ABC transporter superfamily. Thiamine importer (TC 3.A.1.19.1) family. In terms of assembly, the complex is composed of two ATP-binding proteins (ThiQ), two transmembrane proteins (ThiP) and a solute-binding protein (ThiB).

The protein resides in the cell inner membrane. It carries out the reaction thiamine(out) + ATP + H2O = thiamine(in) + ADP + phosphate + H(+). Functionally, part of the ABC transporter complex ThiBPQ involved in thiamine import. Responsible for energy coupling to the transport system. The sequence is that of Thiamine import ATP-binding protein ThiQ from Escherichia coli (strain UTI89 / UPEC).